The primary structure comprises 140 residues: Methylglyoxal synthase (140 aa).

An MGS-like domain is found at 1-140 (MRSKPRIALI…DQAAADDAAP (140 aa)). Residues His12, Lys16, 38 to 41 (TGTT), and 58 to 59 (SG) each bind substrate. Asp64 acts as the Proton donor/acceptor in catalysis. Residue His91 participates in substrate binding.

It belongs to the methylglyoxal synthase family.

It catalyses the reaction dihydroxyacetone phosphate = methylglyoxal + phosphate. Catalyzes the formation of methylglyoxal from dihydroxyacetone phosphate. The sequence is that of Methylglyoxal synthase from Cupriavidus metallidurans (strain ATCC 43123 / DSM 2839 / NBRC 102507 / CH34) (Ralstonia metallidurans).